A 169-amino-acid polypeptide reads, in one-letter code: Putative cysteine protease YraA (169 aa).

In terms of domain architecture, PfpI endopeptidase spans 3-169; sequence KKIAVLVTDQ…FNRESLNLLK (167 aa). The active-site Nucleophile is the C103. The active site involves H104.

Belongs to the peptidase C56 family.

In terms of biological role, functions in the protection against aldehyde-stress, possibly by degrading damaged proteins. This chain is Putative cysteine protease YraA (yraA), found in Bacillus subtilis (strain 168).